Reading from the N-terminus, the 380-residue chain is Transporter PPE51 (380 aa).

Met-1 carries the N-acetylmethionine modification.

This sequence belongs to the mycobacterial PPE family. Interacts with PE19 and PE25.

The protein resides in the cell outer membrane. Functionally, small molecule-selective channel required for the uptake of nutrients across the outer mycomembrane. Transports glycerol and glucose. Involved in sensitivity to M.tuberculosis growth inhibitory agrichemical 3,3-bis-di(methylsulfonyl)propionamide (3bMP1). Transports maltose and lactose disaccharides. Involved in sensitivity to bactericidal thio-disaccharide T-6 compound (1,6-anhydro-3-deoxy-4-S-(2,3,4,6-tetra-O-acetyl-beta-D-glucopyranosyl)-D-glycero-hexopyranos-2-ulose). Transports extracellular trehalose, a component of the cell envelope, and trehalose analog, 6-azido trehalose (6-TreAz), which has antimycobacterial activity. In terms of biological role, plays a role in response to starvation and stress, likely environment within the host. Inhibits canonical autophagy in infected mouse RAW264.7 macrophages. Inhibits autophagy and enhances intracellular bacterial survival when expressed in human macrophage-like THP-1 cells. Inhibits Toll-like receptor 2 (TLR2)-dependent signaling leading to autophagy inhibition, increased intracellular bacterial survival, reduced phagocytosis and reduced secretion of interleukin 6 (IL-6) and IL-1 in infected mouse primary bone marrow-derived macrophage (BMDM) cells. Required for virulence and persistence in the lungs and spleens of intranasally infected C57BL/6J mice. Blocks the antibacterial effects of TLR2 activation, suppresses MHC class II-dependent antigen presentation, and reduces IFN-gamma and TNF-alpha-producing CD4(+) T cells during infection in C57BL/6J mice. This is Transporter PPE51 (PPE51) from Mycobacterium tuberculosis (strain CDC 1551 / Oshkosh).